A 989-amino-acid chain; its full sequence is DEAD-box ATP-dependent RNA helicase 45 (989 aa).

Composition is skewed to basic and acidic residues over residues 1–39 (MLEK…KRCD) and 64–101 (RDSK…EKEK). 2 disordered regions span residues 1-248 (MLEK…AADE) and 305-330 (QGED…DDEE). The stretch at 88–182 (LKRDRERRER…ELKRQNEEAQ (95 aa)) forms a coiled coil. At Ser-119 the chain carries Phosphoserine. Residues 134–179 (SRHGDDDVEKKTRDEQVEDEQKQLAEEVEKRRRRVQEWQELKRQNE) show a composition bias toward basic and acidic residues. Phosphoserine is present on Ser-200. Over residues 203-222 (EVKSDSEMDVDRDTKLENGG) the composition is skewed to basic and acidic residues. Over residues 230-239 (ENETAVTVSE) the composition is skewed to polar residues. Over residues 321–330 (DPSLDEDDEE) the composition is skewed to acidic residues. Positions 396–424 (QFWHQTGLTSKILDTLKKLNYEKPMPIQA) match the Q motif motif. Residues 427–605 (LPIIMSGRDC…RKVLNKPVEI (179 aa)) enclose the Helicase ATP-binding domain. 440-447 (AKTGSGKT) is an ATP binding site. A DEAD box motif is present at residues 553–556 (DEAD). Positions 590 to 748 (QVETLARKVL…PVPDDVKAVA (159 aa)) constitute a Helicase C-terminal domain.

The protein belongs to the DEAD box helicase family. DDX46/PRP5 subfamily.

It catalyses the reaction ATP + H2O = ADP + phosphate + H(+). This chain is DEAD-box ATP-dependent RNA helicase 45 (RH45), found in Arabidopsis thaliana (Mouse-ear cress).